Reading from the N-terminus, the 117-residue chain is Non-specific lipid-transfer protein (117 aa).

An N-terminal signal peptide occupies residues 1–26 (MASSAVIKLACAVLLCIVVAAPYAEA). 4 disulfide bridges follow: cysteine 30–cysteine 76, cysteine 40–cysteine 53, cysteine 54–cysteine 99, and cysteine 74–cysteine 113.

This sequence belongs to the plant LTP family.

Its function is as follows. Plant non-specific lipid-transfer proteins transfer phospholipids as well as galactolipids across membranes. May play a role in wax or cutin deposition in the cell walls of expanding epidermal cells and certain secretory tissues. This chain is Non-specific lipid-transfer protein, found in Spinacia oleracea (Spinach).